Here is a 277-residue protein sequence, read N- to C-terminus: Bifunctional protein FolD (277 aa).

NADP(+) is bound by residues 160 to 162 (GAS), Ser185, and Ile226.

The protein belongs to the tetrahydrofolate dehydrogenase/cyclohydrolase family. Homodimer.

The catalysed reaction is (6R)-5,10-methylene-5,6,7,8-tetrahydrofolate + NADP(+) = (6R)-5,10-methenyltetrahydrofolate + NADPH. The enzyme catalyses (6R)-5,10-methenyltetrahydrofolate + H2O = (6R)-10-formyltetrahydrofolate + H(+). Its pathway is one-carbon metabolism; tetrahydrofolate interconversion. Catalyzes the oxidation of 5,10-methylenetetrahydrofolate to 5,10-methenyltetrahydrofolate and then the hydrolysis of 5,10-methenyltetrahydrofolate to 10-formyltetrahydrofolate. This is Bifunctional protein FolD from Vesicomyosocius okutanii subsp. Calyptogena okutanii (strain HA).